The sequence spans 298 residues: Serine/threonine-protein kinase 1 (298 aa).

A Protein kinase domain is found at 38–276 (FIATRPMFEG…FKSLVSHPWF (239 aa)). ATP contacts are provided by residues 45 to 53 (FEGGRNNVF) and lysine 65. Aspartate 152 (proton acceptor) is an active-site residue.

This sequence belongs to the protein kinase superfamily. Ser/Thr protein kinase family.

The protein resides in the virion. It is found in the host cytoplasm. The enzyme catalyses L-seryl-[protein] + ATP = O-phospho-L-seryl-[protein] + ADP + H(+). It catalyses the reaction L-threonyl-[protein] + ATP = O-phospho-L-threonyl-[protein] + ADP + H(+). Its function is as follows. Essential for viral replication. It may mediate the virus' progression through DNA replication. The sequence is that of Serine/threonine-protein kinase 1 from Ornithodoros (relapsing fever ticks).